Here is a 99-residue protein sequence, read N- to C-terminus: Protein dpy-30 homolog (99 aa).

At M1 the chain carries N-acetylmethionine. Residues 1 to 26 (MEPEQMLEGQTQVAENPHSEYGLTDN) are disordered. The residue at position 19 (S19) is a Phosphoserine. Position 35 is an N6-acetyllysine; alternate (K35). K35 is covalently cross-linked (Glycyl lysine isopeptide (Lys-Gly) (interchain with G-Cter in SUMO2); alternate).

This sequence belongs to the dpy-30 family. In terms of assembly, homodimer. Core component of several methyltransferase-containing complexes including MLL1/MLL, MLL2/3 (also named ASCOM complex) and MLL4/WBP7. Each complex is at least composed of ASH2L, RBBP5, WDR5, DPY30, one or more specific histone methyltransferases (KMT2A/MLL1, KMT2D/MLL2, KMT2C/MLL3 and KMT2B/MLL4), and the facultative components MEN1, HCFC1, HCFC2, NCOA6, KDM6A, PAXIP1/PTIP, PAGR1 and alpha- and beta-tubulin. Interacts with ASH2L; the interaction is direct. Interacts with ARFGEF1. Component of the SET1 complex, at least composed of the catalytic subunit (SETD1A or SETD1B), WDR5, WDR82, RBBP5, ASH2L/ASH2, CXXC1/CFP1, HCFC1 and DPY30.

It is found in the nucleus. The protein localises to the golgi apparatus. Its subcellular location is the trans-Golgi network. Its function is as follows. As part of the MLL1/MLL complex, involved in the methylation of histone H3 at 'Lys-4', particularly trimethylation. Histone H3 'Lys-4' methylation represents a specific tag for epigenetic transcriptional activation. May play some role in histone H3 acetylation. In embryonic stem cells, may play a crucial role in retinoic acid-induced differentiation along the neural lineage, regulating gene induction and H3 'Lys-4' methylation at key developmental loci. May also play an indirect or direct role in endosomal transport. In Bos taurus (Bovine), this protein is Protein dpy-30 homolog (DPY30).